A 393-amino-acid chain; its full sequence is 4-O-methyl-glucuronoyl methylesterase (393 aa).

Positions 1 to 19 (MKLSAALLAIAAFANVASA) are cleaved as a signal peptide. Gln20 carries the pyrrolidone carboxylic acid modification. Residues Cys22 and Cys56 are joined by a disulfide bond. Residues Asn103 and Asn168 are each glycosylated (N-linked (GlcNAc...) asparagine). The GXSYXG catalytic site motif motif lies at 203 to 208 (GCSRNG). Disulfide bonds link Cys204/Cys340 and Cys236/Cys312. The active-site Nucleophile is the Ser205. Substrate-binding residues include Lys209, Gln251, Glu259, and Trp303. The Proton donor/acceptor role is filled by His339.

This sequence belongs to the carbohydrate esterase 15 (CE15) family.

It localises to the secreted. It carries out the reaction a 4-O-methyl-alpha-D-glucuronosyl ester derivative + H2O = 4-O-methyl-alpha-D-glucuronate derivative + an alcohol + H(+). Functionally, glucuronoyl esterase which may play a significant role in biomass degradation, as it is considered to disconnect hemicellulose from lignin through the hydrolysis of the ester bond between 4-O-methyl-D-glucuronic acid residues of glucuronoxylans and aromatic alcohols of lignin. The protein is 4-O-methyl-glucuronoyl methylesterase of Schizophyllum commune (strain H4-8 / FGSC 9210) (Split gill fungus).